The sequence spans 434 residues: Beta-glucuronosyltransferase GlcAT14B (434 aa).

The Cytoplasmic portion of the chain corresponds to 1–21 (MKKLKSYYMQVRNQQQSLDRK). The chain crosses the membrane as a signal-anchor for type II membrane protein span at residues 22-42 (WILPLAIGSICSLFLLLLTNL). Residues 43–434 (ASSSGQTRLI…TENFRPRQCR (392 aa)) lie on the Lumenal side of the membrane. 4 N-linked (GlcNAc...) asparagine glycosylation sites follow: Asn-138, Asn-187, Asn-316, and Asn-392.

Belongs to the glycosyltransferase 14 family.

Its subcellular location is the golgi apparatus membrane. Beta-glucuronosyltransferase involved in the biosynthesis of type II arabinogalactan (AG). Modifies both the beta-1,6-linked galactan and beta-1,3-linked galactan present in type II AG. This is Beta-glucuronosyltransferase GlcAT14B from Arabidopsis thaliana (Mouse-ear cress).